The chain runs to 222 residues: MRPDIKICGLKTPEAVDRALKRGATHIGFIFFEKSPRYIEPDLAAKLAEPARGKAKIVAVVVDPTNDELDEIVSLLKPDMLQLHGNESPEHVLTIKALYGLPVMKVFSVRTADDLKRVEAYIGIADRFLFDAKAPKGSELPGGNGISFDWSLLSWLDGSVDYMLSGGLNKDNVAEALFVTKAPGIDVSSGVETAPGVKSVAKIDEFFDAVEKANAPMMASGS.

It belongs to the TrpF family.

The catalysed reaction is N-(5-phospho-beta-D-ribosyl)anthranilate = 1-(2-carboxyphenylamino)-1-deoxy-D-ribulose 5-phosphate. Its pathway is amino-acid biosynthesis; L-tryptophan biosynthesis; L-tryptophan from chorismate: step 3/5. In Rhizobium johnstonii (strain DSM 114642 / LMG 32736 / 3841) (Rhizobium leguminosarum bv. viciae), this protein is N-(5'-phosphoribosyl)anthranilate isomerase.